A 499-amino-acid polypeptide reads, in one-letter code: Pyruvate kinase 2 (499 aa).

R50 lines the substrate pocket. The K(+) site is built by N52, S54, D84, and T85. N52 to H55 contacts ATP. R91 contributes to the ATP binding site. E241 lines the Mg(2+) pocket. Residues G264, D265, and T297 each coordinate substrate. D265 serves as a coordination point for Mg(2+).

This sequence belongs to the pyruvate kinase family. In terms of assembly, homotetramer. It depends on Mg(2+) as a cofactor. K(+) serves as cofactor.

It carries out the reaction pyruvate + ATP = phosphoenolpyruvate + ADP + H(+). It functions in the pathway carbohydrate degradation; glycolysis; pyruvate from D-glyceraldehyde 3-phosphate: step 5/5. Activated by fructose 2,6-bisphosphate, activated by the effector in a cooperative manner. The protein is Pyruvate kinase 2 (PYK2) of Trypanosoma brucei brucei.